A 642-amino-acid polypeptide reads, in one-letter code: Chaperone protein DnaK (642 aa).

T196 is modified (phosphothreonine; by autocatalysis). Residues 593–603 (STMYQTPSGDT) show a composition bias toward polar residues. Residues 593-642 (STMYQTPSGDTPPSEPETGASEESKGGDKTQGDGEVDAEYEVIDGNDKDK) are disordered. Basic and acidic residues predominate over residues 614 to 624 (EESKGGDKTQG). The segment covering 626–636 (GEVDAEYEVID) has biased composition (acidic residues).

The protein belongs to the heat shock protein 70 family.

Acts as a chaperone. This Chlorobium phaeobacteroides (strain BS1) protein is Chaperone protein DnaK.